A 122-amino-acid chain; its full sequence is Large ribosomal subunit protein uL14 (122 aa).

This sequence belongs to the universal ribosomal protein uL14 family. Part of the 50S ribosomal subunit. Forms a cluster with proteins L3 and L19. In the 70S ribosome, L14 and L19 interact and together make contacts with the 16S rRNA in bridges B5 and B8.

Binds to 23S rRNA. Forms part of two intersubunit bridges in the 70S ribosome. This is Large ribosomal subunit protein uL14 from Micrococcus luteus (strain ATCC 4698 / DSM 20030 / JCM 1464 / CCM 169 / CCUG 5858 / IAM 1056 / NBRC 3333 / NCIMB 9278 / NCTC 2665 / VKM Ac-2230) (Micrococcus lysodeikticus).